A 176-amino-acid chain; its full sequence is ATP synthase subunit b, chloroplastic (176 aa).

The helical transmembrane segment at Leu-19 to Leu-39 threads the bilayer.

This sequence belongs to the ATPase B chain family. F-type ATPases have 2 components, F(1) - the catalytic core - and F(0) - the membrane proton channel. F(1) has five subunits: alpha(3), beta(3), gamma(1), delta(1), epsilon(1). F(0) has four main subunits: a(1), b(1), b'(1) and c(10-14). The alpha and beta chains form an alternating ring which encloses part of the gamma chain. F(1) is attached to F(0) by a central stalk formed by the gamma and epsilon chains, while a peripheral stalk is formed by the delta, b and b' chains.

It is found in the plastid. The protein localises to the chloroplast thylakoid membrane. Its function is as follows. F(1)F(0) ATP synthase produces ATP from ADP in the presence of a proton or sodium gradient. F-type ATPases consist of two structural domains, F(1) containing the extramembraneous catalytic core and F(0) containing the membrane proton channel, linked together by a central stalk and a peripheral stalk. During catalysis, ATP synthesis in the catalytic domain of F(1) is coupled via a rotary mechanism of the central stalk subunits to proton translocation. In terms of biological role, component of the F(0) channel, it forms part of the peripheral stalk, linking F(1) to F(0). The polypeptide is ATP synthase subunit b, chloroplastic (Galdieria sulphuraria (Red alga)).